The following is a 298-amino-acid chain: Aspartate carbamoyltransferase catalytic subunit (298 aa).

The carbamoyl phosphate site is built by Arg50 and Thr51. Lys79 contributes to the L-aspartate binding site. The carbamoyl phosphate site is built by Arg100, His128, and Gln131. Residues Arg160 and Arg221 each contribute to the L-aspartate site. Leu260 and Pro261 together coordinate carbamoyl phosphate.

It belongs to the aspartate/ornithine carbamoyltransferase superfamily. ATCase family. As to quaternary structure, heterooligomer of catalytic and regulatory chains.

The enzyme catalyses carbamoyl phosphate + L-aspartate = N-carbamoyl-L-aspartate + phosphate + H(+). The protein operates within pyrimidine metabolism; UMP biosynthesis via de novo pathway; (S)-dihydroorotate from bicarbonate: step 2/3. Functionally, catalyzes the condensation of carbamoyl phosphate and aspartate to form carbamoyl aspartate and inorganic phosphate, the committed step in the de novo pyrimidine nucleotide biosynthesis pathway. The chain is Aspartate carbamoyltransferase catalytic subunit from Methanosphaerula palustris (strain ATCC BAA-1556 / DSM 19958 / E1-9c).